A 102-amino-acid chain; its full sequence is Small ribosomal subunit protein uS10 (102 aa).

It belongs to the universal ribosomal protein uS10 family. In terms of assembly, part of the 30S ribosomal subunit.

Involved in the binding of tRNA to the ribosomes. The sequence is that of Small ribosomal subunit protein uS10 from Phenylobacterium zucineum (strain HLK1).